We begin with the raw amino-acid sequence, 2327 residues long: Kielin/chordin-like protein (2327 aa).

A signal peptide spans 1–19 (MNTLLWTILLPLLFSFCVC). The tract at residues 250 to 294 (LPLPYSLSGERQMEDEEIQREPRAPDLSDTDHYQQQQSEVPAQLL) is disordered. Residues 268 to 281 (QREPRAPDLSDTDH) show a composition bias toward basic and acidic residues. The stretch at 291–332 (AQLLAKDDRLQRLEEAVKGLTNMIDMIKSQNADLQARVIALE) forms a coiled coil. VWFC domains are found at residues 339–400 (STCV…SVGP), 401–438 (CMSCICQSGEVSCTPKLCPPVTCSDPVTLPNECCPLCA), 439–493 (TGCS…AKCQ), 494–553 (QGCE…PSCP), 554–610 (VCEL…LDCS), 611–669 (ACEM…SQCQ), 670–728 (SCMD…PMCD), 729–786 (GCLY…PRCE), 787–847 (GCEY…PSCD), 848–907 (VCDF…PVCK), 908–966 (VCVQ…PVCD), 967–1025 (SCSY…AKCP), 1026–1083 (DCRY…NNCN), 1084–1142 (GCNY…PQCP), 1146–1203 (ADCP…RSCD), 1204–1260 (GCLM…KECQ), 1261–1319 (DCQY…PVCD), 1321–1377 (CSYN…CPIC), 1378–1439 (QGCH…DGCN), 1440–1495 (YSGR…PRCT), 1496–1555 (GICK…PVCD), 1556–1614 (RCFY…RECP), 1615–1673 (VCRY…PRCR), 1674–1731 (GCVY…PVCA), 1732–1799 (DCIS…SSCA), 1800–1860 (QALS…PVCN), 1861–1924 (ECVV…HECQ), and 1928–1988 (VSCW…PHCI). Residues 1992-2168 (ATCIAFGDPH…SSNDSSSSCW (177 aa)) enclose the VWFD domain. Cystine bridges form between C1994–C2126 and C2016–C2167. The TIL domain occupies 2259–2319 (CPHDRGYVFD…ESHCIPPESC (61 aa)).

The protein resides in the secreted. Functionally, may be a signaling molecule that mediates inductive activities of the embryonic midline. Able to dorsalize mesoderm. The sequence is that of Kielin/chordin-like protein (kcp) from Xenopus laevis (African clawed frog).